The following is a 414-amino-acid chain: Testis-specific Y-encoded-like protein 4 (414 aa).

2 disordered regions span residues 1–129 and 391–414; these read MSGL…AGQK and PRRG…FQSG. Residues 24-40 show a composition bias toward basic and acidic residues; it reads ASGDPDRDQCQGLREET. Positions 101-112 are enriched in low complexity; it reads EAASAAEAADSS.

This sequence belongs to the nucleosome assembly protein (NAP) family.

This Homo sapiens (Human) protein is Testis-specific Y-encoded-like protein 4 (TSPYL4).